The chain runs to 160 residues: tRNA (cytidine(56)-2'-O)-methyltransferase (160 aa).

S-adenosyl-L-methionine is bound by residues L68, 94–98 (GAEKV), and 112–119 (IGNQPHSE).

The protein belongs to the aTrm56 family. As to quaternary structure, homodimer.

The protein localises to the cytoplasm. The catalysed reaction is cytidine(56) in tRNA + S-adenosyl-L-methionine = 2'-O-methylcytidine(56) in tRNA + S-adenosyl-L-homocysteine + H(+). Functionally, specifically catalyzes the AdoMet-dependent 2'-O-ribose methylation of cytidine at position 56 in tRNAs. In Saccharolobus solfataricus (strain ATCC 35092 / DSM 1617 / JCM 11322 / P2) (Sulfolobus solfataricus), this protein is tRNA (cytidine(56)-2'-O)-methyltransferase.